A 139-amino-acid chain; its full sequence is UPF0102 protein Caul_0175 (139 aa).

The protein belongs to the UPF0102 family.

In Caulobacter sp. (strain K31), this protein is UPF0102 protein Caul_0175.